A 179-amino-acid polypeptide reads, in one-letter code: Acireductone dioxygenase (179 aa).

The Fe(2+) site is built by H85, H87, E91, and H132. 4 residues coordinate Ni(2+): H85, H87, E91, and H132.

The protein belongs to the acireductone dioxygenase (ARD) family. Fe(2+) is required as a cofactor. The cofactor is Ni(2+).

Its subcellular location is the cytoplasm. The protein localises to the nucleus. The enzyme catalyses 1,2-dihydroxy-5-(methylsulfanyl)pent-1-en-3-one + O2 = 4-methylsulfanyl-2-oxobutanoate + formate + 2 H(+). The catalysed reaction is 1,2-dihydroxy-5-(methylsulfanyl)pent-1-en-3-one + O2 = 3-(methylsulfanyl)propanoate + CO + formate + 2 H(+). The protein operates within amino-acid biosynthesis; L-methionine biosynthesis via salvage pathway; L-methionine from S-methyl-5-thio-alpha-D-ribose 1-phosphate: step 5/6. Its function is as follows. Catalyzes 2 different reactions between oxygen and the acireductone 1,2-dihydroxy-3-keto-5-methylthiopentene (DHK-MTPene) depending upon the metal bound in the active site. Fe-containing acireductone dioxygenase (Fe-ARD) produces formate and 2-keto-4-methylthiobutyrate (KMTB), the alpha-ketoacid precursor of methionine in the methionine recycle pathway. Ni-containing acireductone dioxygenase (Ni-ARD) produces methylthiopropionate, carbon monoxide and formate, and does not lie on the methionine recycle pathway. The chain is Acireductone dioxygenase from Saccharomyces cerevisiae (strain ATCC 204508 / S288c) (Baker's yeast).